A 437-amino-acid polypeptide reads, in one-letter code: Nuclear envelope integral membrane protein 1 (437 aa).

The first 44 residues, 1 to 44 (MAGGIKVSVWSAVGPGPRCWGAGGGGGATWLLLVVAGCVVCGSA), serve as a signal peptide directing secretion. The N-linked (GlcNAc...) asparagine glycan is linked to N123. The next 5 helical transmembrane spans lie at 159-179 (PKLF…DLLS), 183-203 (IFYY…IVIF), 214-234 (PIYV…QLVF), 244-264 (YWHY…AVCY), and 288-308 (GLMY…VIAL). The a; required for its colocalization with lamins at the nuclear envelope stretch occupies residues 184–295 (FYYSTGMSVG…GLGLMYSSIQ (112 aa)). Residues 334–403 (PVPPRLLTEE…LTPNEVSVHE (70 aa)) are b; required for interaction with RAN-GTP. A required for nuclear localization region spans residues 334 to 437 (PVPPRLLTEE…PTFTQNNFLT (104 aa)). Phosphoserine is present on residues S366, S419, and S420. The segment covering 415–425 (DEELSSEEEGS) has biased composition (acidic residues). A disordered region spans residues 415-437 (DEELSSEEEGSEYPTFTQNNFLT). The segment covering 428-437 (PTFTQNNFLT) has biased composition (polar residues).

The protein belongs to the NEMP family. Homooligomer. Interacts with RAN-GTP. Interacts with EMD. Post-translationally, phosphorylated. Phosphorylation may regulate its interaction with RAN-GTP. In terms of tissue distribution, in the ovary, expression is strongest in primordial follicle oocytes and rapidly declines as oocytes mature and move from the cortex (at protein level).

It localises to the nucleus inner membrane. It is found in the nucleus envelope. Functionally, together with EMD, contributes to nuclear envelope stiffness in germ cells. Required for female fertility. Essential for normal erythropoiesis. Required for efficient nuclear envelope opening and enucleation during the late stages of erythroblast maturation. This Mus musculus (Mouse) protein is Nuclear envelope integral membrane protein 1 (Nemp1).